We begin with the raw amino-acid sequence, 143 residues long: Ribosome-binding factor A (143 aa).

Residues 123 to 143 form a disordered region; the sequence is DNSLQENYKDSDKETKVEKLR.

The protein belongs to the RbfA family. Monomer. Binds 30S ribosomal subunits, but not 50S ribosomal subunits or 70S ribosomes.

Its subcellular location is the cytoplasm. In terms of biological role, one of several proteins that assist in the late maturation steps of the functional core of the 30S ribosomal subunit. Associates with free 30S ribosomal subunits (but not with 30S subunits that are part of 70S ribosomes or polysomes). Required for efficient processing of 16S rRNA. May interact with the 5'-terminal helix region of 16S rRNA. The protein is Ribosome-binding factor A of Francisella philomiragia subsp. philomiragia (strain ATCC 25017 / CCUG 19701 / FSC 153 / O#319-036).